We begin with the raw amino-acid sequence, 147 residues long: Plasminogen receptor (KT) (147 aa).

The Extracellular segment spans residues 1–52; sequence MGFIFSKSMNESMKNQKEFMLMNARLQLERQLIMQSEMRERQMAMQIAWSRE. A helical transmembrane segment spans residues 53-73; sequence FLKYFGTFFGLAAISLTAGAI. Over 74-78 the chain is Cytoplasmic; the sequence is KKKKP. A helical transmembrane segment spans residues 79 to 99; that stretch reads AFLVPIVPLSFILTYQYDLGY. The Extracellular portion of the chain corresponds to 100-147; that stretch reads GTLLERMKGEAEDILETEKSKLQLPRGMITFESIEKARKEQSRFFIDK.

As to quaternary structure, interacts with PLAT and PLAUR. As to expression, expressed in peripheral blood cells and monocytes. Expressed in adrenal medulla.

It is found in the cell membrane. Its function is as follows. Receptor for plasminogen. Regulates urokinase plasminogen activator-dependent and stimulates tissue-type plasminogen activator-dependent cell surface plasminogen activation. Proposed to be part of a local catecholaminergic cell plasminogen activation system that regulates neuroendocrine prohormone processing. Involved in regulation of inflammatory response; regulates monocyte chemotactic migration and matrix metalloproteinase activation, such as of MMP2 and MMP9. The chain is Plasminogen receptor (KT) (PLGRKT) from Homo sapiens (Human).